The sequence spans 153 residues: UPF0251 protein CT0950 (153 aa).

This sequence belongs to the UPF0251 family.

The sequence is that of UPF0251 protein CT0950 from Chlorobaculum tepidum (strain ATCC 49652 / DSM 12025 / NBRC 103806 / TLS) (Chlorobium tepidum).